Here is a 383-residue protein sequence, read N- to C-terminus: Ceramide synthase 3 (383 aa).

Residues 32 to 52 (VFVKPSHLYVTIPYAFLLLII) form a helical membrane-spanning segment. Residues 66–127 (KSFGIKETVR…RSRRNQERPS (62 aa)) are homeobox-like. A TLC domain is found at 130–331 (KKFQEACWRF…ILKMLNRCIF (202 aa)). The next 5 membrane-spanning stretches (helical) occupy residues 139 to 159 (FAFYLMITVAGIAFLYDKPWL), 174 to 194 (LLPSQYWYYILEMSFYWSLLF), 205 to 225 (FLAHIIHHLAAISLMSFSWCA), 264 to 284 (FFIFSTIFFISRLIVFPFWIL), and 298 to 318 (FFSYIFLNLQLMILQVLHLYW). The Cytoplasmic portion of the chain corresponds to 319-383 (GYYILKMLNR…HLIPNGQHGH (65 aa)). The residue at position 340 (serine 340) is a Phosphoserine. Acidic residues predominate over residues 342–355 (DEDYEEEEEEEEEE). Residues 342–363 (DEDYEEEEEEEEEEATKGKEMD) form a disordered region.

In terms of tissue distribution, expressed in the epidermis, where it localizes at the interface between the stratum granulosum and the stratum corneum (at protein level).

It localises to the endoplasmic reticulum membrane. It catalyses the reaction a very long-chain fatty acyl-CoA + a sphingoid base = an N-(very-long-chain fatty acyl)-sphingoid base + CoA + H(+). It carries out the reaction docosanoyl-CoA + sphinganine = N-docosanoylsphinganine + CoA + H(+). The enzyme catalyses tetracosanoyl-CoA + sphinganine = N-tetracosanoylsphinganine + CoA + H(+). The catalysed reaction is hexacosanoyl-CoA + sphinganine = N-hexacosanoylsphinganine + CoA + H(+). It catalyses the reaction 2-hydroxydocosanoyl-CoA + sphinganine = N-(2-hydroxydocosanoyl)-sphinganine + CoA + H(+). It carries out the reaction 2-hydroxytetracosanoyl-CoA + sphinganine = N-(2-hydroxytetracosanoyl)-sphinganine + CoA + H(+). The enzyme catalyses an ultra-long-chain fatty acyl-CoA + a sphingoid base = an N-(ultra-long-chain-acyl)-sphingoid base + CoA + H(+). The catalysed reaction is octacosanoyl-CoA + sphinganine = N-(octacosanoyl)-sphinganine + CoA + H(+). It catalyses the reaction a fatty acyl-CoA + sphing-4-enine = an N-acylsphing-4-enine + CoA + H(+). It carries out the reaction sphinganine + octadecanoyl-CoA = N-(octadecanoyl)-sphinganine + CoA + H(+). The enzyme catalyses 2-hydroxyoctadecanoyl-CoA + sphinganine = N-(2-hydroxyoctadecanoyl)-sphinganine + CoA + H(+). It participates in lipid metabolism; sphingolipid metabolism. Its function is as follows. Ceramide synthase that catalyzes the transfer of the acyl chain from acyl-CoA to a sphingoid base, with high selectivity toward very- and ultra-long-chain fatty acyl-CoA (chain length greater than C22). N-acylates sphinganine and sphingosine bases to form dihydroceramides and ceramides in de novo synthesis and salvage pathways, respectively. It is crucial for the synthesis of ultra-long-chain ceramides in the epidermis, to maintain epidermal lipid homeostasis and terminal differentiation. The sequence is that of Ceramide synthase 3 from Homo sapiens (Human).